A 156-amino-acid chain; its full sequence is 6,7-dimethyl-8-ribityllumazine synthase (156 aa).

5-amino-6-(D-ribitylamino)uracil is bound by residues Phe22, 56–58, and 80–82; these read AFE and AVI. Position 85–86 (85–86) interacts with (2S)-2-hydroxy-3-oxobutyl phosphate; that stretch reads ST. The Proton donor role is filled by His88. Residue Phe113 coordinates 5-amino-6-(D-ribitylamino)uracil. Arg127 is a (2S)-2-hydroxy-3-oxobutyl phosphate binding site.

It belongs to the DMRL synthase family.

The enzyme catalyses (2S)-2-hydroxy-3-oxobutyl phosphate + 5-amino-6-(D-ribitylamino)uracil = 6,7-dimethyl-8-(1-D-ribityl)lumazine + phosphate + 2 H2O + H(+). The protein operates within cofactor biosynthesis; riboflavin biosynthesis; riboflavin from 2-hydroxy-3-oxobutyl phosphate and 5-amino-6-(D-ribitylamino)uracil: step 1/2. Its function is as follows. Catalyzes the formation of 6,7-dimethyl-8-ribityllumazine by condensation of 5-amino-6-(D-ribitylamino)uracil with 3,4-dihydroxy-2-butanone 4-phosphate. This is the penultimate step in the biosynthesis of riboflavin. The protein is 6,7-dimethyl-8-ribityllumazine synthase of Caldicellulosiruptor saccharolyticus (strain ATCC 43494 / DSM 8903 / Tp8T 6331).